We begin with the raw amino-acid sequence, 64 residues long: Large ribosomal subunit protein bL35 (64 aa).

The span at 1–15 (MPKNKTHSGASKRFR) shows a compositional bias: basic residues. A disordered region spans residues 1–20 (MPKNKTHSGASKRFRVTGSG).

It belongs to the bacterial ribosomal protein bL35 family.

The protein is Large ribosomal subunit protein bL35 of Nocardioides sp. (strain ATCC BAA-499 / JS614).